The chain runs to 222 residues: Phosphoribosylformylglycinamidine synthase subunit PurQ (222 aa).

The Glutamine amidotransferase type-1 domain maps to 3–222 (AAVLVFPGSN…ASLAAALVAA (220 aa)). Residue Cys86 is the Nucleophile of the active site. Catalysis depends on residues His194 and Glu196.

As to quaternary structure, part of the FGAM synthase complex composed of 1 PurL, 1 PurQ and 2 PurS subunits.

The protein resides in the cytoplasm. The enzyme catalyses N(2)-formyl-N(1)-(5-phospho-beta-D-ribosyl)glycinamide + L-glutamine + ATP + H2O = 2-formamido-N(1)-(5-O-phospho-beta-D-ribosyl)acetamidine + L-glutamate + ADP + phosphate + H(+). The catalysed reaction is L-glutamine + H2O = L-glutamate + NH4(+). It participates in purine metabolism; IMP biosynthesis via de novo pathway; 5-amino-1-(5-phospho-D-ribosyl)imidazole from N(2)-formyl-N(1)-(5-phospho-D-ribosyl)glycinamide: step 1/2. In terms of biological role, part of the phosphoribosylformylglycinamidine synthase complex involved in the purines biosynthetic pathway. Catalyzes the ATP-dependent conversion of formylglycinamide ribonucleotide (FGAR) and glutamine to yield formylglycinamidine ribonucleotide (FGAM) and glutamate. The FGAM synthase complex is composed of three subunits. PurQ produces an ammonia molecule by converting glutamine to glutamate. PurL transfers the ammonia molecule to FGAR to form FGAM in an ATP-dependent manner. PurS interacts with PurQ and PurL and is thought to assist in the transfer of the ammonia molecule from PurQ to PurL. This Jannaschia sp. (strain CCS1) protein is Phosphoribosylformylglycinamidine synthase subunit PurQ.